Reading from the N-terminus, the 238-residue chain is Thrombin-like enzyme AhV_TL-I (238 aa).

The Peptidase S1 domain occupies 1-229 (IIGGDECNIN…HLDWIENIIA (229 aa)). Disulfide bonds link Cys7-Cys141, Cys28-Cys44, Cys76-Cys236, Cys120-Cys190, Cys152-Cys169, and Cys180-Cys205. Residue His43 is the Charge relay system of the active site. N-linked (GlcNAc...) asparagine glycosylation occurs at Asn81. Catalysis depends on Asp88, which acts as the Charge relay system. Ser184 (charge relay system) is an active-site residue.

It belongs to the peptidase S1 family. Snake venom subfamily. As to quaternary structure, monomer. Post-translationally, N-glycosylated at Asn-81 by a disaccharide composed of two N-acetylglucosamine (NAG). The presence of this N-glycan deforms the enzyme and Removing the carbohydrate moiety increases the esterase activity, but induces a complete loss of contractile response on mouse thoracic aorta. In terms of tissue distribution, expressed by the venom gland.

It is found in the secreted. Its activity is regulated as follows. Inhibited by PMSF, L-cysteine and partially by SBTI and leupeptin. Its function is as follows. Thrombin-like enzyme that shows fibrinogenolytic activity against both the Aalpha (FGA) and Bbeta (FGB) chains of bovine fibrinogen. This enzyme has poor esterolytic activity upon BAEE substrate. It induces mouse thoracic aortic ring contraction with EC(50)=147 nmol/L. It shows vasoconstrictor effects that are independent of the enzymatic activity, but related to the release of calcium ions form the calcium store, potentially through the activation of ryanodine receptors. This chain is Thrombin-like enzyme AhV_TL-I, found in Gloydius halys (Chinese water mocassin).